Here is a 355-residue protein sequence, read N- to C-terminus: RNA 3'-terminal phosphate cyclase (355 aa).

Residues glutamine 109 and 291-295 (HLADQ) each bind ATP. Catalysis depends on histidine 316, which acts as the Tele-AMP-histidine intermediate.

Belongs to the RNA 3'-terminal cyclase family. Type 1 subfamily.

It is found in the cytoplasm. It carries out the reaction a 3'-end 3'-phospho-ribonucleotide-RNA + ATP = a 3'-end 2',3'-cyclophospho-ribonucleotide-RNA + AMP + diphosphate. Catalyzes the conversion of 3'-phosphate to a 2',3'-cyclic phosphodiester at the end of RNA. The mechanism of action of the enzyme occurs in 3 steps: (A) adenylation of the enzyme by ATP; (B) transfer of adenylate to an RNA-N3'P to produce RNA-N3'PP5'A; (C) and attack of the adjacent 2'-hydroxyl on the 3'-phosphorus in the diester linkage to produce the cyclic end product. The biological role of this enzyme is unknown but it is likely to function in some aspects of cellular RNA processing. The chain is RNA 3'-terminal phosphate cyclase from Koribacter versatilis (strain Ellin345).